Consider the following 364-residue polypeptide: Dihydroorotate dehydrogenase (quinone) (364 aa).

Residues 61 to 65 (AGYDK) and Thr-85 each bind FMN. Substrate is bound at residue Lys-65. 110–114 (NRLGF) is a binding site for substrate. Residues Asn-139 and Asn-170 each coordinate FMN. Asn-170 is a substrate binding site. Catalysis depends on Ser-173, which acts as the Nucleophile. Residue Asn-175 coordinates substrate. FMN-binding residues include Lys-215 and Ser-243. 244–245 (NT) serves as a coordination point for substrate. FMN contacts are provided by residues Gly-266, Gly-295, and 316-317 (YT).

It belongs to the dihydroorotate dehydrogenase family. Type 2 subfamily. As to quaternary structure, monomer. FMN serves as cofactor.

It is found in the cell membrane. It carries out the reaction (S)-dihydroorotate + a quinone = orotate + a quinol. It functions in the pathway pyrimidine metabolism; UMP biosynthesis via de novo pathway; orotate from (S)-dihydroorotate (quinone route): step 1/1. Functionally, catalyzes the conversion of dihydroorotate to orotate with quinone as electron acceptor. The protein is Dihydroorotate dehydrogenase (quinone) of Brucella canis (strain ATCC 23365 / NCTC 10854 / RM-666).